The sequence spans 977 residues: Synaptonemal complex protein 2-like (977 aa).

Disordered regions lie at residues 447-474, 574-593, 642-728, and 804-824; these read LGSQ…LSNA, QSTE…NSPL, RNKS…QDIM, and TEKN…VFYS. The segment covering 449-462 has biased composition (low complexity); that stretch reads SQTSEHSSTTKTSS. Positions 463-474 are enriched in polar residues; it reads ANRSVQKSLSNA. The segment covering 674 to 693 has biased composition (basic and acidic residues); sequence SRKEMHRPEDINPKSPHSAE.

It belongs to the SYCP2 family. Ubiquitinated and gradually degraded by the proteasome during oocyte maturation. In terms of processing, phosphorylated in maturing oocytes, before its degradation. Expressed in immature oocytes (at protein level). Expressed in the ovary.

Its subcellular location is the nucleus. It localises to the chromosome. The protein localises to the centromere. The protein resides in the nucleolus. In terms of biological role, oocyte-specific protein that localizes to centromeres at the dictyate stage and regulates the survival of primordial oocytes. The polypeptide is Synaptonemal complex protein 2-like (sycp2l) (Xenopus laevis (African clawed frog)).